A 617-amino-acid chain; its full sequence is Prothrombin (617 aa).

An N-terminal signal peptide occupies residues 1–24; sequence MLHVRGLGLPGCLALAALASLVHS. A propeptide spanning residues 25–43 is cleaved from the precursor; the sequence is QHVFLAPQQALSLLQRVRR. Residues 44-90 enclose the Gla domain; sequence ANSGFLEELRKGNLERECVEEQCSYEEAFEALESPQDTDVFWAKYTV. E50, E51, E58, E60, E63, E64, E69, E70, E73, and E76 each carry 4-carboxyglutamate. C61 and C66 are disulfide-bonded. 10 disulfides stabilise this stretch: C91–C104, C109–C187, C130–C170, C158–C182, C215–C292, C236–C276, C264–C287, C332–C478, C387–C403, and C532–C546. 2 Kringle domains span residues 109 to 187 and 215 to 292; these read CAMD…IPVC and CLLE…LNYC. N-linked (GlcNAc...) asparagine glycosylation is found at N120 and N144. The Peptidase S1 domain occupies 360-614; sequence IVEGWDAEKG…LKRWMQKVID (255 aa). H402 acts as the Charge relay system in catalysis. The N-linked (GlcNAc...) asparagine glycan is linked to N412. Catalysis depends on D458, which acts as the Charge relay system. Positions 547 to 569 are high affinity receptor-binding region which is also known as the TP508 peptide; sequence AGFKVNDTKRGDACEGDSGGPFV. N552 carries an N-linked (GlcNAc...) asparagine glycan. C560 and C590 are joined by a disulfide. S564 functions as the Charge relay system in the catalytic mechanism.

It belongs to the peptidase S1 family. Heterodimer (named alpha-thrombin) of a light and a heavy chain; disulfide-linked. Forms a heterodimer with SERPINA5. In plasma, interacts (via N-terminus) with alpha-1-microglobulin; this interaction does not prevent the activation of prothrombin to thrombin. In terms of processing, the gamma-carboxyglutamyl residues, which bind calcium ions, result from the carboxylation of glutamyl residues by a microsomal enzyme, the vitamin K-dependent carboxylase. The modified residues are necessary for the calcium-dependent interaction with a negatively charged phospholipid surface, which is essential for the conversion of prothrombin to thrombin. In the penultimate step of the coagulation cascade, prothrombin is converted to thrombin by the prothrombinase complex composed of factor Xa (F10), cofactor Va (F5), and phospholipids. This activation requires factor Xa-catalyzed sequential cleavage at 2 sites, Arg-310 and Arg-359, along 2 possible pathways. In the first pathway, the first cleavage occurs at Arg-310, leading to the formation of the inactive intermediate prethrombin-2. This pathway preferentially occurs on platelets and in the absence of cofactor Va. In the second pathway, the first cleavage occurs at Arg-359, which separates protease domain into 2 chains that remain connected through a disulfide bond and generates the active intermediate meizothrombin. The presence of cofactor Va directs activation along the meizothrombin pathway and greatly accelerates the rate of cleavage at Arg-359, but has a smaller effect on the cleavage of meizothrombin at Arg-310. Meizothrombin accumulates as an intermediate when prothrombinase is assembled on the membrane of red blood cells.

The enzyme catalyses Selective cleavage of Arg-|-Gly bonds in fibrinogen to form fibrin and release fibrinopeptides A and B.. Activity is promoted in the presence of negatively charged surfaces, such as polyphosphate and dextran sulfate. Inhibited by SERPINA5. Thrombin, which cleaves bonds after Arg and Lys, converts fibrinogen to fibrin and activates factors V, VII, VIII, XIII, and, in complex with thrombomodulin, protein C. Functions in blood homeostasis, inflammation and wound healing. Activates coagulation factor XI (F11); activation is promoted by the contact with negatively charged surfaces. Triggers the production of pro-inflammatory cytokines, such as MCP-1/CCL2 and IL8/CXCL8, in endothelial cells. The sequence is that of Prothrombin (F2) from Rattus norvegicus (Rat).